Here is a 165-residue protein sequence, read N- to C-terminus: Regulatory protein RecX (165 aa).

Belongs to the RecX family.

The protein localises to the cytoplasm. In terms of biological role, modulates RecA activity. This is Regulatory protein RecX from Cronobacter sakazakii (strain ATCC BAA-894) (Enterobacter sakazakii).